The primary structure comprises 480 residues: Proline--tRNA ligase (480 aa).

Belongs to the class-II aminoacyl-tRNA synthetase family. ProS type 3 subfamily. Homodimer.

The protein resides in the cytoplasm. The enzyme catalyses tRNA(Pro) + L-proline + ATP = L-prolyl-tRNA(Pro) + AMP + diphosphate. Its function is as follows. Catalyzes the attachment of proline to tRNA(Pro) in a two-step reaction: proline is first activated by ATP to form Pro-AMP and then transferred to the acceptor end of tRNA(Pro). This is Proline--tRNA ligase from Chloroflexus aggregans (strain MD-66 / DSM 9485).